A 968-amino-acid polypeptide reads, in one-letter code: Isoleucine--tRNA ligase (968 aa).

The 'HIGH' region signature appears at 68 to 78 (PYANGALHMGH). L-isoleucyl-5'-AMP is bound at residue glutamate 584. The 'KMSKS' region signature appears at 625-629 (KMSKS). Lysine 628 lines the ATP pocket. Cysteine 938, cysteine 941, cysteine 958, and cysteine 961 together coordinate Zn(2+).

It belongs to the class-I aminoacyl-tRNA synthetase family. IleS type 1 subfamily. As to quaternary structure, monomer. It depends on Zn(2+) as a cofactor.

It localises to the cytoplasm. The catalysed reaction is tRNA(Ile) + L-isoleucine + ATP = L-isoleucyl-tRNA(Ile) + AMP + diphosphate. Catalyzes the attachment of isoleucine to tRNA(Ile). As IleRS can inadvertently accommodate and process structurally similar amino acids such as valine, to avoid such errors it has two additional distinct tRNA(Ile)-dependent editing activities. One activity is designated as 'pretransfer' editing and involves the hydrolysis of activated Val-AMP. The other activity is designated 'posttransfer' editing and involves deacylation of mischarged Val-tRNA(Ile). The polypeptide is Isoleucine--tRNA ligase (Prochlorococcus marinus (strain MIT 9313)).